The following is a 305-amino-acid chain: Cytochrome c biogenesis protein CcsA (305 aa).

8 consecutive transmembrane segments (helical) span residues 11-31 (ANASFALLLITMLIYGMKAIF), 36-56 (ILQLFGTLGILFSNFLVALLL), 75-95 (LMFLCWCFTFFHLLIEKYIQI), 97-117 (FIGFITVPIAMLVNAFATFFL), 142-162 (IMMASYAALILGSLLSIAFLF), 212-232 (TIGIGFPLLTIGIISGAVWAN), 239-259 (WSWDPKETWALITWIIFAIYL), and 273-293 (AIVAFIGFVIVWVCYLGVNLL).

The protein belongs to the CcmF/CycK/Ccl1/NrfE/CcsA family. May interact with Ccs1.

The protein resides in the plastid. It is found in the chloroplast thylakoid membrane. Its function is as follows. Required during biogenesis of c-type cytochromes (cytochrome c6 and cytochrome f) at the step of heme attachment. This is Cytochrome c biogenesis protein CcsA from Mesostigma viride (Green alga).